Here is a 114-residue protein sequence, read N- to C-terminus: Ribonuclease P protein component (114 aa).

Belongs to the RnpA family. Consists of a catalytic RNA component (M1 or rnpB) and a protein subunit.

It catalyses the reaction Endonucleolytic cleavage of RNA, removing 5'-extranucleotides from tRNA precursor.. Its function is as follows. RNaseP catalyzes the removal of the 5'-leader sequence from pre-tRNA to produce the mature 5'-terminus. It can also cleave other RNA substrates such as 4.5S RNA. The protein component plays an auxiliary but essential role in vivo by binding to the 5'-leader sequence and broadening the substrate specificity of the ribozyme. This is Ribonuclease P protein component from Borrelia hermsii (strain HS1 / DAH).